The following is a 187-amino-acid chain: Calcium and integrin-binding family member 2 (187 aa).

3 EF-hand domains span residues 66-101 (RENPFKERIVEAFSEDGEGNLTFNDFVDMFSVLCES), 103-138 (PRELKANYAFKIYDFNTDNFICKEDLEMTLARLTKS), and 144-179 (EVVLVCDKVIEEADLDGDGKLGFADFEDMIAKAPDF). Positions 116, 118, 120, 127, 157, 159, 161, 163, and 168 each coordinate Ca(2+).

Monomer. Homodimer. Interacts with WHRN and MYO7A. Interacts with ITGA2B (via C-terminus cytoplasmic tail region); this interaction is stabilized/increased in a calcium and magnesium-dependent manner. Interacts with ITGA7 (via C-terminus cytoplasmic tail region); this interaction is stabilized/increased in a calcium and magnesium-dependent manner. Interacts with TMC1. Interacts with TMC2. Interacts with PIEZO1. Expressed in inner and outer segments of photoreceptor cells, as well as in the pigmented epithelium. Also observed in the inner and outer plexiform layers and in the ganglion cell layer (at protein level). Expressed in sensory hair cell stereocilia, with expression mainly at the basal body of the kinocilium and in the hair bundle stereocilia; and the apical surface of hair cells (at protein level). Located in the tip region of the stereocilia and at the apical surface of hair cells around the cuticular plate (at protein level). Not expressed in the hair bundles of the vestibular hair cells. Strongly expressed in skeletal muscles, brain, kidney and liver. Expressed in the skeletal muscle, retina and cochlea. Expressed in megakaryocytes and endothelial cells. Expressed in heart, spleen, lung, and inner ear. In the inner ear, expressed in the vestibule, basilar membrane and spiral ganglion cells. Expressed in the supporting cells in both the organ of Corti and the vestibular sensory epithelia.

The protein resides in the cytoplasm. It localises to the cell projection. It is found in the stereocilium. Its subcellular location is the photoreceptor inner segment. The protein localises to the cilium. The protein resides in the photoreceptor outer segment. It localises to the cell membrane. It is found in the sarcolemma. In terms of biological role, calcium- and integrin-binding protein that plays a role in intracellular calcium homeostasis. Acts as an auxiliary subunit of the sensory mechanoelectrical transduction (MET) channel in hair cells. Essential for mechanoelectrical transduction (MET) currents in auditory hair cells and thereby required for hearing. Regulates the function of hair cell mechanotransduction by controlling the distribution of transmembrane channel-like proteins TMC1 and TMC2, and by regulating the function of the MET channels in hair cells. Required for the maintenance of auditory hair cell stereocilia bundle morphology and function and for hair-cell survival in the cochlea. Critical for proper photoreceptor cell maintenance and function. Plays a role in intracellular calcium homeostasis by decreasing ATP-induced calcium release. Seems to be dispensable for vestibular functions. The polypeptide is Calcium and integrin-binding family member 2 (Cib2) (Mus musculus (Mouse)).